A 124-amino-acid polypeptide reads, in one-letter code: Small ribosomal subunit protein uS12cz/uS12cy (124 aa).

It belongs to the universal ribosomal protein uS12 family. Part of the 30S ribosomal subunit.

Its subcellular location is the plastid. It localises to the chloroplast. Functionally, with S4 and S5 plays an important role in translational accuracy. Located at the interface of the 30S and 50S subunits. The polypeptide is Small ribosomal subunit protein uS12cz/uS12cy (rps12-A) (Agrostis stolonifera (Creeping bentgrass)).